A 162-amino-acid chain; its full sequence is Cyanate hydratase (162 aa).

Residues Arg-102, Glu-105, and Ser-128 contribute to the active site.

It belongs to the cyanase family.

The catalysed reaction is cyanate + hydrogencarbonate + 3 H(+) = NH4(+) + 2 CO2. In terms of biological role, catalyzes the reaction of cyanate with bicarbonate to produce ammonia and carbon dioxide. This Mycosarcoma maydis (Corn smut fungus) protein is Cyanate hydratase.